The primary structure comprises 645 residues: Methionine--tRNA ligase (645 aa).

The short motif at tyrosine 13–asparagine 23 is the 'HIGH' region element. 4 residues coordinate Zn(2+): cysteine 128, cysteine 131, cysteine 145, and cysteine 148. The 'KMSKS' region signature appears at lysine 298–serine 302. An ATP-binding site is contributed by lysine 301. Residues aspartate 544–arginine 645 form the tRNA-binding domain.

It belongs to the class-I aminoacyl-tRNA synthetase family. MetG type 2A subfamily. In terms of assembly, homodimer. Zn(2+) serves as cofactor.

It localises to the cytoplasm. The catalysed reaction is tRNA(Met) + L-methionine + ATP = L-methionyl-tRNA(Met) + AMP + diphosphate. Its function is as follows. Is required not only for elongation of protein synthesis but also for the initiation of all mRNA translation through initiator tRNA(fMet) aminoacylation. This is Methionine--tRNA ligase (metG) from Clostridium perfringens (strain 13 / Type A).